The sequence spans 435 residues: Serine--tRNA ligase (435 aa).

242–244 (TAE) contributes to the L-serine binding site. 273–275 (RSE) is a binding site for ATP. Glutamate 296 serves as a coordination point for L-serine. 360 to 363 (EISS) is a binding site for ATP. L-serine is bound at residue serine 396.

Belongs to the class-II aminoacyl-tRNA synthetase family. Type-1 seryl-tRNA synthetase subfamily. As to quaternary structure, homodimer. The tRNA molecule binds across the dimer.

It is found in the cytoplasm. The catalysed reaction is tRNA(Ser) + L-serine + ATP = L-seryl-tRNA(Ser) + AMP + diphosphate + H(+). The enzyme catalyses tRNA(Sec) + L-serine + ATP = L-seryl-tRNA(Sec) + AMP + diphosphate + H(+). It functions in the pathway aminoacyl-tRNA biosynthesis; selenocysteinyl-tRNA(Sec) biosynthesis; L-seryl-tRNA(Sec) from L-serine and tRNA(Sec): step 1/1. Catalyzes the attachment of serine to tRNA(Ser). Is also able to aminoacylate tRNA(Sec) with serine, to form the misacylated tRNA L-seryl-tRNA(Sec), which will be further converted into selenocysteinyl-tRNA(Sec). In Vibrio campbellii (strain ATCC BAA-1116), this protein is Serine--tRNA ligase.